The following is a 281-amino-acid chain: UPF0500 protein C1orf216 homolog (281 aa).

Residues 1-12 (MFTIQKPDTVSH) are compositionally biased toward polar residues. Residues 1–197 (MFTIQKPDTV…SSSDSDSISV (197 aa)) are disordered. The span at 45–74 (TYDKNENWSQDKKGGEEGENKSKSEDEHSS) shows a compositional bias: basic and acidic residues. Low complexity-rich tracts occupy residues 92–102 (STGSEGISLSS), 147–161 (SSSL…VSAS), and 169–178 (PAPTTTPQEN). A compositionally biased stretch (acidic residues) spans 179-190 (PETEDSDVESSS). Residues 198–257 (TLSEAFQSLQDKEKLKEREKEKHHAQLTMYRRLALLRWIRALQQKVRDQQNRLQESFDTI) adopt a coiled-coil conformation.

It belongs to the UPF0500 family.

This Xenopus laevis (African clawed frog) protein is UPF0500 protein C1orf216 homolog.